Consider the following 409-residue polypeptide: Beta-arrestin-2 (409 aa).

Y48 carries the post-translational modification Phosphotyrosine. 2 positions are modified to hydroxyproline; by PHD2: P176 and P181. An interaction with TRAF6 region spans residues 240-409 (ADICLFSTAQ…KDDDYDDQLC (170 aa)). Position 360 is a phosphoserine (S360). Positions 363–409 (PETDVPVDTNLIEFDTNYATDDDIVFEDFARLRLKGMKDDDYDDQLC) are interaction with AP2B1. T382 carries the phosphothreonine modification. The [DE]-X(1,2)-F-X-X-[FL]-X-X-X-R motif signature appears at 385–395 (DIVFEDFARLR).

This sequence belongs to the arrestin family. As to quaternary structure, homooligomer; the self-association is mediated by InsP6-binding. Heterooligomer with ARRB1; the association is mediated by InsP6-binding. Interacts with ADRB2 and CHRM2. Interacts with PDE4A. Interacts with PDE4D. Interacts with MAPK10, MAPK1 and MAPK3. Interacts with DRD2. Interacts with FSHR. Interacts with CLTC. Interacts with HTR2C. Interacts with CCR5. Interacts with CXCR4. Interacts with SRC. Interacts with DUSP16; the interaction is interrupted by stimulation of AGTR1 and activation of MAPK10. Interacts with CHUK; the interaction is enhanced stimulation of ADRB2. Interacts with RELA. Interacts with MDM2; the interaction is enhanced by activation of GPCRs. Interacts with SLC9A5. Interacts with TRAF6. Interacts with IGF1R. Interacts with ENG. Interacts with KIR2DL1, KIR2DL3 and KIR2DL4. Interacts with LDLR. Interacts with AP2B1. Interacts with C5AR1. Interacts with RAF1. Interacts with MAP2K1. Interacts with MAPK1. Interacts with MAPK10; the interaction enhances MAPK10 activation by MAP3K5. Interacts with MAP2K4; the interaction is enhanced by presence of MAP3K5 and MAPK10. Interacts with MAP3K5. Interacts with AKT1. Interacts with IKBKB and MAP3K14. Interacts with SMO (activated). Interacts with GSK3A and GSK3B. Associates with protein phosphatase 2A (PP2A). Interacts with DHX8; the interaction is detected in the nucleus upon OR1D2 stimulation. Interacts with GAPDHS; the interaction is detected in the nucleus upon OR1D2 stimulation. Interacts with H2AFX; the interaction is detected in the nucleus upon OR1D2 stimulation. Interacts with KIF14; the interaction is detected in the nucleus upon OR1D2 stimulation. Interacts with RCC1; the interaction is detected in the nucleus upon OR1D2 stimulation. Interacts with CXCR4; the interaction is dependent on C-terminal phosphorylation of CXCR4 and allows activation of MAPK1 and MAPK3. Interacts with GPR143. Interacts with HCK and CXCR1 (phosphorylated). Interacts with ACKR3 and ACKR4. Interacts with ARRDC1; the interaction is direct. Interacts with GPR61, GPR62 and GPR135. Interacts (via NACHT and LRR domains) with NLRP3; this interaction is direct and inducible by omega-3 polyunsaturated fatty acids (PUFAs). Interacts with FFAR4 (via C-terminus); this interaction is stimulated by long-chain fatty acids (LCFAs). Interacts with GPR35. Interacts with GPR84. Interacts with TIGIT; this interaction inhibits the NF-kappa-B pathway. Interacts with TGFBR3. Phosphorylated at Thr-382 in the cytoplasm; probably dephosphorylated at the plasma membrane. The phosphorylation does not regulate internalization and recycling of ADRB2, interaction with clathrin or AP2B1. In terms of processing, the ubiquitination status appears to regulate the formation and trafficking of beta-arrestin-GPCR complexes and signaling. Ubiquitination appears to occur GPCR-specific. Ubiquitinated by MDM2; the ubiquitination is required for rapid internalization of ADRB2. Deubiquitinated by USP33; the deubiquitination leads to a dissociation of the beta-arrestin-GPCR complex. Stimulation of a class A GPCR, such as ADRB2, induces transient ubiquitination and subsequently promotes association with USP33. Stimulation of a class B GPCR promotes a sustained ubiquitination. Deubiquitinated by USP20; allowing USP20 to deubiquitinate TRAF6 leading to inhibition of NF-kappa-B signaling. Post-translationally, hydroxylation by PHD2 modulates the rate of internalization by slowing down recruitment to the plasma membrane and inhibiting subsequent co-internalization with class A receptors.

Its subcellular location is the cytoplasm. It localises to the nucleus. The protein resides in the cell membrane. It is found in the membrane. The protein localises to the clathrin-coated pit. Its subcellular location is the cytoplasmic vesicle. Functions in regulating agonist-mediated G-protein coupled receptor (GPCR) signaling by mediating both receptor desensitization and resensitization processes. During homologous desensitization, beta-arrestins bind to the GPRK-phosphorylated receptor and sterically preclude its coupling to the cognate G-protein; the binding appears to require additional receptor determinants exposed only in the active receptor conformation. The beta-arrestins target many receptors for internalization by acting as endocytic adapters (CLASPs, clathrin-associated sorting proteins) and recruiting the GPRCs to the adapter protein 2 complex 2 (AP-2) in clathrin-coated pits (CCPs). However, the extent of beta-arrestin involvement appears to vary significantly depending on the receptor, agonist and cell type. Internalized arrestin-receptor complexes traffic to intracellular endosomes, where they remain uncoupled from G-proteins. Two different modes of arrestin-mediated internalization occur. Class A receptors, like ADRB2, OPRM1, ENDRA, D1AR and ADRA1B dissociate from beta-arrestin at or near the plasma membrane and undergo rapid recycling. Class B receptors, like AVPR2, AGTR1, NTSR1, TRHR and TACR1 internalize as a complex with arrestin and traffic with it to endosomal vesicles, presumably as desensitized receptors, for extended periods of time. Receptor resensitization then requires that receptor-bound arrestin is removed so that the receptor can be dephosphorylated and returned to the plasma membrane. Mediates endocytosis of CCR7 following ligation of CCL19 but not CCL21. Involved in internalization of P2RY1, P2RY4, P2RY6 and P2RY11 and ATP-stimulated internalization of P2RY2. Involved in phosphorylation-dependent internalization of OPRD1 and subsequent recycling or degradation. Involved in ubiquitination of IGF1R. Beta-arrestins function as multivalent adapter proteins that can switch the GPCR from a G-protein signaling mode that transmits short-lived signals from the plasma membrane via small molecule second messengers and ion channels to a beta-arrestin signaling mode that transmits a distinct set of signals that are initiated as the receptor internalizes and transits the intracellular compartment. Acts as a signaling scaffold for MAPK pathways such as MAPK1/3 (ERK1/2) and MAPK10 (JNK3). ERK1/2 and JNK3 activated by the beta-arrestin scaffold are largely excluded from the nucleus and confined to cytoplasmic locations such as endocytic vesicles, also called beta-arrestin signalosomes. Acts as a signaling scaffold for the AKT1 pathway. GPCRs for which the beta-arrestin-mediated signaling relies on both ARRB1 and ARRB2 (codependent regulation) include ADRB2, F2RL1 and PTH1R. For some GPCRs the beta-arrestin-mediated signaling relies on either ARRB1 or ARRB2 and is inhibited by the other respective beta-arrestin form (reciprocal regulation). Increases ERK1/2 signaling in AGTR1- and AVPR2-mediated activation (reciprocal regulation). Involved in CCR7-mediated ERK1/2 signaling involving ligand CCL19. Is involved in type-1A angiotensin II receptor/AGTR1-mediated ERK activity. Is involved in type-1A angiotensin II receptor/AGTR1-mediated MAPK10 activity. Is involved in dopamine-stimulated AKT1 activity in the striatum by disrupting the association of AKT1 with its negative regulator PP2A. Involved in AGTR1-mediated chemotaxis. Appears to function as signaling scaffold involved in regulation of MIP-1-beta-stimulated CCR5-dependent chemotaxis. Involved in attenuation of NF-kappa-B-dependent transcription in response to GPCR or cytokine stimulation by interacting with and stabilizing CHUK. Suppresses UV-induced NF-kappa-B-dependent activation by interacting with CHUK. The function is promoted by stimulation of ADRB2 and dephosphorylation of ARRB2. Involved in p53/TP53-mediated apoptosis by regulating MDM2 and reducing the MDM2-mediated degradation of p53/TP53. May serve as nuclear messenger for GPCRs. Upon stimulation of OR1D2, may be involved in regulation of gene expression during the early processes of fertilization. Also involved in regulation of receptors other than GPCRs. Involved in endocytosis of TGFBR2 and TGFBR3 and down-regulates TGF-beta signaling such as NF-kappa-B activation. Involved in endocytosis of low-density lipoprotein receptor/LDLR. Involved in endocytosis of smoothened homolog/Smo, which also requires GRK2. Involved in endocytosis of SLC9A5. Involved in endocytosis of ENG and subsequent TGF-beta-mediated ERK activation and migration of epithelial cells. Involved in Toll-like receptor and IL-1 receptor signaling through the interaction with TRAF6 which prevents TRAF6 autoubiquitination and oligomerization required for activation of NF-kappa-B and JUN. Involved in insulin resistance by acting as insulin-induced signaling scaffold for SRC, AKT1 and INSR. Involved in regulation of inhibitory signaling of natural killer cells by recruiting PTPN6 and PTPN11 to KIR2DL1. Involved in IL8-mediated granule release in neutrophils. Involved in the internalization of the atypical chemokine receptor ACKR3. Acts as an adapter protein coupling FFAR4 receptor to specific downstream signaling pathways, as well as mediating receptor endocytosis. During the activation step of NLRP3 inflammasome, directly associates with NLRP3 leading to inhibition of pro-inflammatory cytokine release and inhibition of inflammation. The sequence is that of Beta-arrestin-2 (ARRB2) from Homo sapiens (Human).